The following is a 232-amino-acid chain: Dehydrin DHN2 (232 aa).

The segment covering 1–12 (MSQYQNQYGAQT) has biased composition (polar residues). Disordered stretches follow at residues 1 to 92 (MSQY…STNT), 131 to 156 (PGTE…SGGG), and 173 to 232 (PGDK…CTGH). The segment covering 73 to 82 (THTGGVGGYG) has biased composition (gly residues). Over residues 131–140 (PGTEQSRTHT) the composition is skewed to basic and acidic residues. The span at 143-156 (TGYGSTGYGASGGG) shows a compositional bias: gly residues. Residues 200-223 (YVREEHRVDHGEKKGIMDKIKEKL) are compositionally biased toward basic and acidic residues.

Belongs to the plant dehydrin family.

This is Dehydrin DHN2 (DHN2) from Pisum sativum (Garden pea).